The following is a 158-amino-acid chain: MKALYPGSFDPLTFGHLDLIQRGSDLFGEVLIAVLENPSKKATFSCERRIEQIKNATKDIPGCRTIAFKGLTVDCAHENNADLILRGLRAMSDFEYELQVAHTNRSLNNQYETIFLATETHHSFLSSSVVKEVARFGGEIRHMVPEFIAKDLMKLNTN.

A substrate-binding site is contributed by Ser-8. ATP is bound by residues 8–9 (SF) and His-16. 3 residues coordinate substrate: Lys-40, Thr-72, and Arg-86. ATP-binding positions include 87–89 (GLR), Glu-97, and 122–128 (HSFLSSS).

The protein belongs to the bacterial CoaD family. As to quaternary structure, homohexamer. It depends on Mg(2+) as a cofactor.

Its subcellular location is the cytoplasm. The enzyme catalyses (R)-4'-phosphopantetheine + ATP + H(+) = 3'-dephospho-CoA + diphosphate. It functions in the pathway cofactor biosynthesis; coenzyme A biosynthesis; CoA from (R)-pantothenate: step 4/5. Its function is as follows. Reversibly transfers an adenylyl group from ATP to 4'-phosphopantetheine, yielding dephospho-CoA (dPCoA) and pyrophosphate. The sequence is that of Phosphopantetheine adenylyltransferase from Prochlorococcus marinus (strain NATL2A).